A 1000-amino-acid polypeptide reads, in one-letter code: Receptor-type tyrosine-protein kinase FLT3 (1000 aa).

The first 27 residues, Met-1–Thr-27, serve as a signal peptide directing secretion. At Asn-28–Ser-544 the chain is on the extracellular side. Cystine bridges form between Cys-36/Cys-66 and Cys-104/Cys-115. A glycan (N-linked (GlcNAc...) asparagine) is linked at Asn-44. The segment at Gly-45 to Thr-67 is disordered. N-linked (GlcNAc...) asparagine glycans are attached at residues Asn-133 and Asn-152. 2 cysteine pairs are disulfide-bonded: Cys-200–Cys-207 and Cys-273–Cys-331. The region spanning Pro-254–Thr-344 is the Ig-like C2-type domain. Residues Asn-307, Asn-324, and Asn-352 are each glycosylated (N-linked (GlcNAc...) asparagine). Intrachain disulfides connect Cys-369/Cys-408 and Cys-382/Cys-393. Asn-445, Asn-474, Asn-503, and Asn-542 each carry an N-linked (GlcNAc...) asparagine glycan. A helical transmembrane segment spans residues Phe-545–Cys-564. Residues His-565 to Gln-992 lie on the Cytoplasmic side of the membrane. The residue at position 573 (Tyr-573) is a Phosphotyrosine. The residue at position 575 (Ser-575) is a Phosphoserine. A phosphotyrosine; by autocatalysis mark is found at Tyr-590 and Tyr-592. An important for normal regulation of the kinase activity and for maintaining the kinase in an inactive state in the absence of ligand binding region spans residues Tyr-592 to Tyr-598. A Phosphotyrosine modification is found at Tyr-600. A Protein kinase domain is found at Leu-611–Leu-946. Residues Leu-617–Val-625 and Lys-645 each bind ATP. The residue at position 727 (Tyr-727) is a Phosphotyrosine; by autocatalysis. At Ser-760 the chain carries Phosphoserine. A phosphotyrosine mark is found at Tyr-769 and Tyr-796. The active-site Proton acceptor is Asp-814. At Tyr-845 the chain carries Phosphotyrosine; by autocatalysis. Tyr-958 and Tyr-972 each carry phosphotyrosine. A disordered region spans residues His-968–Ser-1000. Ser-1000 is modified (phosphoserine).

It belongs to the protein kinase superfamily. Tyr protein kinase family. CSF-1/PDGF receptor subfamily. As to quaternary structure, monomer in the absence of bound FLT3LG. Homodimer in the presence of bound FLT3LG. Interacts with FIZ1 following ligand activation. Interacts with FES, FER, LYN, FGR, HCK, SRC and GRB2. Interacts with PTPRJ/DEP-1 and PTPN11/SHP2. Interacts with RNF115 and RNF126. N-glycosylated, contains complex N-glycans with sialic acid. In terms of processing, autophosphorylated on several tyrosine residues in response to FLT3LG binding. FLT3LG binding also increases phosphorylation of mutant kinases that are constitutively activated. Dephosphorylated by PTPRJ/DEP-1, PTPN1, PTPN6/SHP-1, and to a lesser degree by PTPN12. Dephosphorylation is important for export from the endoplasmic reticulum and location at the cell membrane. Post-translationally, rapidly ubiquitinated by UBE2L6 and the E3 ubiquitin-protein ligase SIAH1 after autophosphorylation, leading to its proteasomal degradation. In terms of tissue distribution, hematopoietic stem and progenitor cell-enriched populations. Found in brain, placenta and testis.

It localises to the membrane. It is found in the endoplasmic reticulum lumen. It carries out the reaction L-tyrosyl-[protein] + ATP = O-phospho-L-tyrosyl-[protein] + ADP + H(+). Present in an inactive conformation in the absence of bound ligand. FLT3LG binding leads to dimerization and activation by autophosphorylation. In terms of biological role, tyrosine-protein kinase that acts as a cell-surface receptor for the cytokine FLT3LG and regulates differentiation, proliferation and survival of hematopoietic progenitor cells and of dendritic cells. Promotes phosphorylation of SHC1 and AKT1, and activation of the downstream effector MTOR. Promotes activation of RAS signaling and phosphorylation of downstream kinases, including MAPK1/ERK2 and/or MAPK3/ERK1. Promotes phosphorylation of FES, FER, PTPN6/SHP, PTPN11/SHP-2, PLCG1, and STAT5A and/or STAT5B. Activation of wild-type FLT3 causes only marginal activation of STAT5A or STAT5B. Mutations that cause constitutive kinase activity promote cell proliferation and resistance to apoptosis via the activation of multiple signaling pathways. This Mus musculus (Mouse) protein is Receptor-type tyrosine-protein kinase FLT3 (Flt3).